The chain runs to 238 residues: Aspirochlorine biosynthesis protein N (238 aa).

The protein belongs to the asaB hydroxylase/desaturase family.

It functions in the pathway mycotoxin biosynthesis. In terms of biological role, part of the gene cluster that mediates the biosynthesis of aspirochlorine (or antibiotic A30641), an unusual halogenated spiro compound with distinctive antifungal properties due to selective inhibition of protein biosynthesis, and which is also active against bacteria, viruses, and murine tumor cells. The non-ribosomal peptide synthetase (NRPS) aclP is responsible the formation of the diketopiperazine (DKP) core from the condensation of 2 phenylalanine residues. One Phe residue is tailored into chlorotyrosine by hydroxylation and chlorination, whereas the second Phe undergoes an unprecedented C-C bond cleavage to be converted into glycine. After formation of the DKP, sulfur is incorporated into the DKP by conjugation with glutathione by aclG, followed by its stepwise degradation to the thiol by aclI, aclJ and aclK, and the dithiol oxidation by aclT. In addition, oxygenases (aclB, aclC, aclL and aclO) and O-methyltransferases (aclM and aclU) act as tailoring enzymes to produce the intermediate dechloroaspirochlorine. Ultimately, chlorination of dechloroaspirochlorine by the halogenase aclH is the last step in the aspirochlorine pathway. The sequence is that of Aspirochlorine biosynthesis protein N from Aspergillus oryzae (strain ATCC 42149 / RIB 40) (Yellow koji mold).